Consider the following 426-residue polypeptide: Serine--tRNA ligase (426 aa).

233–235 contacts L-serine; that stretch reads TSE. Residue 264 to 266 participates in ATP binding; that stretch reads RAE. Glu-287 is a binding site for L-serine. 351–354 is an ATP binding site; the sequence is EISS. Residue Ser-387 coordinates L-serine.

Belongs to the class-II aminoacyl-tRNA synthetase family. Type-1 seryl-tRNA synthetase subfamily. In terms of assembly, homodimer. The tRNA molecule binds across the dimer.

Its subcellular location is the cytoplasm. The catalysed reaction is tRNA(Ser) + L-serine + ATP = L-seryl-tRNA(Ser) + AMP + diphosphate + H(+). The enzyme catalyses tRNA(Sec) + L-serine + ATP = L-seryl-tRNA(Sec) + AMP + diphosphate + H(+). The protein operates within aminoacyl-tRNA biosynthesis; selenocysteinyl-tRNA(Sec) biosynthesis; L-seryl-tRNA(Sec) from L-serine and tRNA(Sec): step 1/1. In terms of biological role, catalyzes the attachment of serine to tRNA(Ser). Is also able to aminoacylate tRNA(Sec) with serine, to form the misacylated tRNA L-seryl-tRNA(Sec), which will be further converted into selenocysteinyl-tRNA(Sec). This Xanthomonas euvesicatoria pv. vesicatoria (strain 85-10) (Xanthomonas campestris pv. vesicatoria) protein is Serine--tRNA ligase.